Here is a 147-residue protein sequence, read N- to C-terminus: Formiminotransferase N-terminal subdomain-containing protein (147 aa).

Positions 1 to 20 are cleaved as a signal peptide; the sequence is MSSSRVGLRLAACLLNVSEA.

This sequence belongs to the formiminotransferase family. Widely expressed with highest levels in liver and skeletal muscle, and moderate levels in kidney, bone and pancreas.

The sequence is that of Formiminotransferase N-terminal subdomain-containing protein (FTCDNL1) from Homo sapiens (Human).